The following is a 358-amino-acid chain: 3-isopropylmalate dehydrogenase (358 aa).

An NAD(+)-binding site is contributed by 77-90 (GPKWTHLPPDQQPE). Positions 98, 108, 137, and 226 each coordinate substrate. Residues aspartate 226, aspartate 250, and aspartate 254 each coordinate Mg(2+). Residue 284–296 (GSAPDIAGKGIAN) coordinates NAD(+).

It belongs to the isocitrate and isopropylmalate dehydrogenases family. LeuB type 1 subfamily. As to quaternary structure, homodimer. Mg(2+) is required as a cofactor. Mn(2+) serves as cofactor.

It localises to the cytoplasm. It carries out the reaction (2R,3S)-3-isopropylmalate + NAD(+) = 4-methyl-2-oxopentanoate + CO2 + NADH. It participates in amino-acid biosynthesis; L-leucine biosynthesis; L-leucine from 3-methyl-2-oxobutanoate: step 3/4. In terms of biological role, catalyzes the oxidation of 3-carboxy-2-hydroxy-4-methylpentanoate (3-isopropylmalate) to 3-carboxy-4-methyl-2-oxopentanoate. The product decarboxylates to 4-methyl-2 oxopentanoate. The sequence is that of 3-isopropylmalate dehydrogenase from Mannheimia succiniciproducens (strain KCTC 0769BP / MBEL55E).